The sequence spans 450 residues: MRECISIHIGQAGIQVGNACWELYCLEHGIQPDGQMPSDKTVGGGDDAFNTFFSETGAGKHVPRAVFVDLEPTVIDEVRTGTYRQLFHPEQLISGKEDAANNFARGHYTIGKEIVDLCLDRIRKLADNCTGLQGFLVFNAVGGGTGSGLGSLLLERLSVDYGKKSKLGFTVYPSPQVSTSVVEPYNSVLSTHSLLEHTDVSILLDNEAIYDICRRSLSIERPTYTNLNRLVSQVISSLTASLRFDGALNVDVTEFQTNLVPYPRIHFMLSSYAPVISAEKAFHEQLSVAEITNSAFEPASMMAKCDPRHGKYMACCLMYRGDVVPKDVNAAVGTIKTKRTIQFVDWCPTGFKCGINYQPPTVVPGGDLAKVQRAVCMISNSTSVAEVFSRIDHKFDLMYAKRAFVHWYVGEGMEEGEFSEAREDLAALEKDYEEVGAEGGDDEDDEGEEY.

Positions 11, 71, 144, 145, 179, 206, and 228 each coordinate GTP. Glutamate 71 serves as a coordination point for Mg(2+). Glutamate 254 is an active-site residue. Threonine 349 carries the post-translational modification Phosphothreonine. Positions 430–450 (KDYEEVGAEGGDDEDDEGEEY) are disordered. Over residues 431 to 450 (DYEEVGAEGGDDEDDEGEEY) the composition is skewed to acidic residues.

The protein belongs to the tubulin family. As to quaternary structure, dimer of alpha and beta chains. A typical microtubule is a hollow water-filled tube with an outer diameter of 25 nm and an inner diameter of 15 nM. Alpha-beta heterodimers associate head-to-tail to form protofilaments running lengthwise along the microtubule wall with the beta-tubulin subunit facing the microtubule plus end conferring a structural polarity. Microtubules usually have 13 protofilaments but different protofilament numbers can be found in some organisms and specialized cells. Mg(2+) serves as cofactor. Post-translationally, undergoes a tyrosination/detyrosination cycle, the cyclic removal and re-addition of a C-terminal tyrosine residue by the enzymes tubulin tyrosine carboxypeptidase (TTCP) and tubulin tyrosine ligase (TTL), respectively. Acetylation of alpha chains at Lys-40 stabilizes microtubules and affects affinity and processivity of microtubule motors. This modification has a role in multiple cellular functions, ranging from cell motility, cell cycle progression or cell differentiation to intracellular trafficking and signaling.

It is found in the cytoplasm. The protein localises to the cytoskeleton. The catalysed reaction is GTP + H2O = GDP + phosphate + H(+). Tubulin is the major constituent of microtubules, a cylinder consisting of laterally associated linear protofilaments composed of alpha- and beta-tubulin heterodimers. Microtubules grow by the addition of GTP-tubulin dimers to the microtubule end, where a stabilizing cap forms. Below the cap, tubulin dimers are in GDP-bound state, owing to GTPase activity of alpha-tubulin. The chain is Tubulin alpha-2 chain (TUBA2) from Arabidopsis thaliana (Mouse-ear cress).